Here is an 86-residue protein sequence, read N- to C-terminus: Myosuppressin (86 aa).

Positions 1–18 are cleaved as a signal peptide; the sequence is MAIFCNNVLAALPTQCNP. A propeptide spanning residues 19–70 is cleaved from the precursor; the sequence is GFLDDLPPRIRKVCVALSRIYELGSEMESYIGDKENHITGFHESIPLLDSGV. Gln-73 carries the post-translational modification Pyrrolidone carboxylic acid. A Phenylalanine amide modification is found at Phe-82.

It localises to the secreted. Myoinhibiting neuropeptide. In Apis mellifera (Honeybee), this protein is Myosuppressin.